We begin with the raw amino-acid sequence, 262 residues long: Proline-rich protein 23C (262 aa).

Disordered regions lie at residues M1–P52 and V225–E262. A compositionally biased stretch (pro residues) spans P226–H242. The span at A243–P252 shows a compositional bias: basic and acidic residues. Residues C253–E262 are compositionally biased toward basic residues.

This sequence belongs to the PRR23 family.

The sequence is that of Proline-rich protein 23C (PRR23C) from Homo sapiens (Human).